A 432-amino-acid polypeptide reads, in one-letter code: Nuclear pore complex-interacting protein family member B9 (432 aa).

Disordered regions lie at residues 260-280 (RMGRQPPPPTQQHSITDNSLS) and 353-420 (SPLP…LRTR). Residues 270 to 280 (QQHSITDNSLS) show a composition bias toward polar residues. Over residues 374-402 (EVEKPPKPKRWRVDEVEQSPKPKRQREAE) the composition is skewed to basic and acidic residues. A compositionally biased stretch (basic residues) spans 408 to 420 (KPKRRRLSKLRTR).

The protein belongs to the NPIP family.

The polypeptide is Nuclear pore complex-interacting protein family member B9 (NPIPB9) (Homo sapiens (Human)).